The sequence spans 119 residues: UPF0344 protein lp_1373 (119 aa).

4 helical membrane passes run 1-21, 32-52, 60-80, and 92-112; these read MYLLGHIIGWLWLMLTVAIGL, FLILSRIGYLLIIITGVALAI, WLTLLKVILGLGTIGLIEVAF, and LVTLLVCGTLLTIICGIGLHW.

The protein belongs to the UPF0344 family.

Its subcellular location is the cell membrane. The polypeptide is UPF0344 protein lp_1373 (Lactiplantibacillus plantarum (strain ATCC BAA-793 / NCIMB 8826 / WCFS1) (Lactobacillus plantarum)).